A 383-amino-acid polypeptide reads, in one-letter code: Succinate--CoA ligase [ADP-forming] subunit beta (383 aa).

The 233-residue stretch at 9–241 folds into the ATP-grasp domain; sequence KEVLHKFNVS…YDEEVKEEIE (233 aa). ATP-binding positions include Lys46, 53–55, Glu99, Ser102, and Glu107; that span reads GRG. Asn196 and Asp210 together coordinate Mg(2+). Substrate contacts are provided by residues Asn261 and 318–320; that span reads GIM.

It belongs to the succinate/malate CoA ligase beta subunit family. In terms of assembly, heterotetramer of two alpha and two beta subunits. The cofactor is Mg(2+).

The catalysed reaction is succinate + ATP + CoA = succinyl-CoA + ADP + phosphate. The enzyme catalyses GTP + succinate + CoA = succinyl-CoA + GDP + phosphate. Its pathway is carbohydrate metabolism; tricarboxylic acid cycle; succinate from succinyl-CoA (ligase route): step 1/1. In terms of biological role, succinyl-CoA synthetase functions in the citric acid cycle (TCA), coupling the hydrolysis of succinyl-CoA to the synthesis of either ATP or GTP and thus represents the only step of substrate-level phosphorylation in the TCA. The beta subunit provides nucleotide specificity of the enzyme and binds the substrate succinate, while the binding sites for coenzyme A and phosphate are found in the alpha subunit. The polypeptide is Succinate--CoA ligase [ADP-forming] subunit beta (Wolbachia sp. subsp. Drosophila simulans (strain wRi)).